The sequence spans 253 residues: Chitooligosaccharide deacetylase (253 aa).

Mg(2+) is bound by residues H61 and H125.

It belongs to the YdjC deacetylase family. ChbG subfamily. As to quaternary structure, homodimer. Mg(2+) is required as a cofactor.

It is found in the cytoplasm. It carries out the reaction N,N'-diacetylchitobiose + H2O = N-acetyl-beta-D-glucosaminyl-(1-&gt;4)-D-glucosamine + acetate. It catalyses the reaction diacetylchitobiose-6'-phosphate + H2O = N'-monoacetylchitobiose-6'-phosphate + acetate. The protein operates within glycan degradation; chitin degradation. Its function is as follows. Involved in the degradation of chitin. ChbG is essential for growth on the acetylated chitooligosaccharides chitobiose and chitotriose but is dispensable for growth on cellobiose and chitosan dimer, the deacetylated form of chitobiose. Deacetylation of chitobiose-6-P and chitotriose-6-P is necessary for both the activation of the chb promoter by the regulatory protein ChbR and the hydrolysis of phosphorylated beta-glucosides by the phospho-beta-glucosidase ChbF. Catalyzes the removal of only one acetyl group from chitobiose-6-P to yield monoacetylchitobiose-6-P, the inducer of ChbR and the substrate of ChbF. The protein is Chitooligosaccharide deacetylase of Proteus mirabilis (strain HI4320).